The following is a 104-amino-acid chain: ATP-dependent Clp protease adapter protein ClpS (104 aa).

The protein belongs to the ClpS family. In terms of assembly, binds to the N-terminal domain of the chaperone ClpA.

In terms of biological role, involved in the modulation of the specificity of the ClpAP-mediated ATP-dependent protein degradation. The polypeptide is ATP-dependent Clp protease adapter protein ClpS (Hydrogenovibrio crunogenus (strain DSM 25203 / XCL-2) (Thiomicrospira crunogena)).